A 928-amino-acid polypeptide reads, in one-letter code: Inner tegument protein (928 aa).

The tract at residues 482-928 (WGGAVPANLA…LAGLRKLFVE (447 aa)) is interaction with large tegument protein.

Belongs to the herpesviridae inner tegument protein family. As to quaternary structure, interacts (via C-terminus) with the large tegument protein/LTP (via N-terminus).

Its subcellular location is the virion tegument. It is found in the host cytoplasm. The protein resides in the host nucleus. It localises to the host Golgi apparatus. The protein localises to the host trans-Golgi network. In terms of biological role, plays an essential role in cytoplasmic secondary envelopment during viral egress. Interacts with the capsid via the large tegument protein/LTP and participates in its transport to the host trans-Golgi network (TGN) where secondary envelopment occurs. Modulates tegumentation and capsid accumulation at the viral assembly complex. The polypeptide is Inner tegument protein (ORF63) (Homo sapiens (Human)).